Reading from the N-terminus, the 177-residue chain is NADH-quinone oxidoreductase subunit B (177 aa).

Residues Cys-56, Cys-57, Cys-121, and Cys-151 each contribute to the [4Fe-4S] cluster site.

The protein belongs to the complex I 20 kDa subunit family. NDH-1 is composed of 14 different subunits. Subunits NuoB, C, D, E, F, and G constitute the peripheral sector of the complex. Requires [4Fe-4S] cluster as cofactor.

The protein localises to the cell inner membrane. The enzyme catalyses a quinone + NADH + 5 H(+)(in) = a quinol + NAD(+) + 4 H(+)(out). Its function is as follows. NDH-1 shuttles electrons from NADH, via FMN and iron-sulfur (Fe-S) centers, to quinones in the respiratory chain. Couples the redox reaction to proton translocation (for every two electrons transferred, four hydrogen ions are translocated across the cytoplasmic membrane), and thus conserves the redox energy in a proton gradient. The sequence is that of NADH-quinone oxidoreductase subunit B from Jannaschia sp. (strain CCS1).